The following is a 431-amino-acid chain: Extensin-3 (431 aa).

Residues 1–27 (MGSPMASLVATLLVLTISLTFVSQSTA) form the signal peptide. 3 tandem repeats follow at residues 33 to 41 (SPPPPVKHY), 49 to 55 (SPPPVYH), and 56 to 63 (SPPPPKKH). A 13 X 9 AA repeats of S-P-P-P-P-V-K-H-Y region spans residues 33 to 384 (SPPPPVKHYT…KSPPPPVKHY (352 aa)). Positions 42–408 (TPPVKHYSPP…KYVYKSPPPP (367 aa)) are disordered. The segment covering 49-59 (SPPPVYHSPPP) has biased composition (pro residues). The segment at 49–391 (SPPPVYHSPP…KHYSPPPVYH (343 aa)) is 13 X 7 AA repeats of S-P-P-P-V-Y-H. Residues 56–371 (SPPPPKKHYE…YHSPPPPKKH (316 aa)) are 12 X 8 AA repeats of S-P-P-P-P-K-K-H. The tract at residues 64-67 (YEYK) is isodityrosine cross-linking. A run of 3 repeats spans residues 68-76 (SPPPPVKHY), 77-83 (SPPPVYH), and 84-91 (SPPPPKKH). Residues 68 to 87 (SPPPPVKHYSPPPVYHSPPP) show a composition bias toward pro residues. The tract at residues 92 to 95 (YVYK) is isodityrosine cross-linking. Repeat copies occupy residues 96–104 (SPPPPVKHY), 105–111 (SPPPVYH), and 112–119 (SPPPPKKH). Over residues 96–115 (SPPPPVKHYSPPPVYHSPPP) the composition is skewed to pro residues. Residues 120–123 (YVYK) are isodityrosine cross-linking. A run of 3 repeats spans residues 124–132 (SPPPPVKHY), 133–139 (SPPPVYH), and 140–147 (SPPPPKKH). The segment covering 124–143 (SPPPPVKHYSPPPVYHSPPP) has biased composition (pro residues). The isodityrosine cross-linking stretch occupies residues 148–151 (YVYK). 3 repeat units span residues 152 to 160 (SPPPPVKHY), 161 to 167 (SPPPVYH), and 168 to 175 (SPPPPKKH). Over residues 152–171 (SPPPPVKHYSPPPVYHSPPP) the composition is skewed to pro residues. An isodityrosine cross-linking region spans residues 176–179 (YVYK). A run of 3 repeats spans residues 180 to 188 (SPPPPVKHY), 189 to 195 (SPPPVYH), and 196 to 203 (SPPPPKKH). The span at 180–199 (SPPPPVKHYSPPPVYHSPPP) shows a compositional bias: pro residues. Residues 204-207 (YVYK) form an isodityrosine cross-linking region. Repeat copies occupy residues 208-216 (SPPPPVKHY), 217-223 (SPPPVYH), and 224-231 (SPPPPKKH). Residues 208-227 (SPPPPVKHYSPPPVYHSPPP) are compositionally biased toward pro residues. An isodityrosine cross-linking region spans residues 232 to 235 (YVYK). A run of 3 repeats spans residues 236–244 (SPPPPVKHY), 245–251 (SPPPVYH), and 252–259 (SPPPPKKH). A compositionally biased stretch (pro residues) spans 236 to 255 (SPPPPVKHYSPPPVYHSPPP). The interval 260–263 (YVYK) is isodityrosine cross-linking. 3 tandem repeats follow at residues 264-272 (SPPPPVKHY), 273-279 (SPPPVYH), and 280-287 (SPPPPKKH). The span at 264-283 (SPPPPVKHYSPPPVYHSPPP) shows a compositional bias: pro residues. The isodityrosine cross-linking stretch occupies residues 288-291 (YVYK). 3 repeat units span residues 292–300 (SPPPPVKHY), 301–307 (SPPPVYH), and 308–315 (SPPPPKKH). Residues 292–311 (SPPPPVKHYSPPPVYHSPPP) are compositionally biased toward pro residues. The tract at residues 316–319 (YVYK) is isodityrosine cross-linking. 3 consecutive repeat copies span residues 320-328 (SPPPPVKHY), 329-335 (SPPPVYH), and 336-343 (SPPPPKKH). Residues 320-339 (SPPPPVKHYSPPPVYHSPPP) show a composition bias toward pro residues. Positions 344–347 (YVYK) are isodityrosine cross-linking. 3 repeat units span residues 348–356 (SPPPPVKHY), 357–363 (SPPPVYH), and 364–371 (SPPPPKKH). A compositionally biased stretch (pro residues) spans 348 to 367 (SPPPPVKHYSPPPVYHSPPP). Positions 372–375 (YVYK) are isodityrosine cross-linking. Tandem repeats lie at residues 376-384 (SPPPPVKHY) and 385-391 (SPPPVYH). The span at 376–395 (SPPPPVKHYSPPPVYHSPPP) shows a compositional bias: pro residues. Isodityrosine cross-linking regions lie at residues 400 to 403 (YVYK) and 420 to 423 (YLYK).

It belongs to the extensin family. In terms of processing, the proline residues of the Ser-Pro(3) repeats are hydroxylated and then O-glycosylated (arabinosylation) by HPAT1, HPAT2 and HPAT3. Around 20% of Hyp units are in the nonglycosylated form. The Ser residues are O-galactosylated. The lack of Ser-O-galactosylation does not affect Hyp-O-arabinosylation, but both types of O-glycosylation are central for the functionality of the protein. Correct Hyp-O-arabinosylation appears to be responsible for generating a bend on the EXT3 backbone around a YVY motif, which may represent a better scenario for Tyr intramolecular cross-links (isodityrosine type). Post-translationally, synthetised as soluble proteins which become insolubilised in the cell wall through the intermolecular cross-linking of Tyr on adjacent monomers. Isodityrosine (IDT) stabilizes and makes rigid the part of the polypeptide where IDT functional sites are present. Predominantly expressed in the roots.

The protein localises to the secreted. Its subcellular location is the primary cell wall. Functionally, structural component which strengthens the primary cell wall. Forms dendritic structures indicating a propensity for self-assembly through tyrosine cross-linking. Forms intermolecular cross-links exclusively by pulcherosine (three Tyr). Scaffold formation requires an unobstructed C-terminus of EXT3. Required for the correct positioning of the cell plate during cytokinesis in cells of the developing embryo. Extensins contain a characteristic repeat of the pentapeptide Ser-Pro(4). For this particular extensin, a typical repeat of Ser-Pro(3) is found. In Arabidopsis thaliana (Mouse-ear cress), this protein is Extensin-3.